Reading from the N-terminus, the 189-residue chain is dCTP deaminase (189 aa).

DCTP-binding positions include Lys112–Arg117, Thr136–Glu138, Gln157, Tyr171, and Gln181. Glu138 serves as the catalytic Proton donor/acceptor.

It belongs to the dCTP deaminase family. As to quaternary structure, homotrimer.

The enzyme catalyses dCTP + H2O + H(+) = dUTP + NH4(+). The protein operates within pyrimidine metabolism; dUMP biosynthesis; dUMP from dCTP (dUTP route): step 1/2. In terms of biological role, catalyzes the deamination of dCTP to dUTP. The protein is dCTP deaminase of Acinetobacter baylyi (strain ATCC 33305 / BD413 / ADP1).